The following is a 305-amino-acid chain: MDLSGVKKKSLLGVKENNKKSSTRAPSPTKRKDRSDEKSKDRSKDKGATKESSEKDRGRDKTRKRRSASSGSSSTRSRSSSTSSSGSSTSTGSSSGSSSSSASSRSGSSSTSRSSSSSSSSGSPSPSRRRHDNRRRSRSKSKPPKRDEKERKRRSPSPKPTKVHIGRLTRNVTKDHIMEIFSTYGKIKMIDMPVERMHPHLSKGYAYVEFENPDEAEKALKHMDGGQIDGQEITATAVLAPWPRPPPRRFSPPRRMLPPPPMWRRSPPRMRRRSRSPRRRSPVRRRSRSPGRRRHRSRSSSNSSR.

Residues 1 to 10 (MDLSGVKKKS) show a composition bias toward basic residues. A necessary for interaction with SRP54, nuclear localization and exon-skipping region spans residues 1–161 (MDLSGVKKKS…KRRSPSPKPT (161 aa)). The interval 1-170 (MDLSGVKKKS…TKVHIGRLTR (170 aa)) is disordered. Residues 1–220 (MDLSGVKKKS…ENPDEAEKAL (220 aa)) form a necessary for interaction with the cleaved p110 isoform of CDC2L1 region. Glycyl lysine isopeptide (Lys-Gly) (interchain with G-Cter in SUMO2) cross-links involve residues Lys7 and Lys15. Residues 33-59 (DRSDEKSKDRSKDKGATKESSEKDRGR) show a composition bias toward basic and acidic residues. Phosphoserine; by CK2 is present on Ser53. Low complexity predominate over residues 68–126 (ASSGSSSTRSRSSSTSSSGSSTSTGSSSGSSSSSASSRSGSSSTSRSSSSSSSSGSPSP). The tract at residues 69 to 121 (SSGSSSTRSRSSSTSSSGSSTSTGSSSGSSSSSASSRSGSSSTSRSSSSSSSS) is necessary for interactions with UPF2 and UPF3B and UPF2-dependent NMD. Composition is skewed to basic residues over residues 127–143 (SRRR…KSKP) and 151–167 (RKRR…HIGR). Phosphoserine occurs at positions 155 and 157. Residues 156-242 (PSPKPTKVHI…ITATAVLAPW (87 aa)) are necessary for interaction with PNN and exon-skipping. The tract at residues 159-244 (KPTKVHIGRL…ATAVLAPWPR (86 aa)) is interaction with SAP18 and ACIN1. Thr161 bears the Phosphothreonine mark. Residues 161-240 (TKVHIGRLTR…QEITATAVLA (80 aa)) form the RRM domain. Lys218 bears the N6-acetyllysine mark. Positions 238–305 (VLAPWPRPPP…RSRSSSNSSR (68 aa)) are necessary for interaction with TRA2B, nuclear localization and exon-skipping. The segment at 240 to 305 (APWPRPPPRR…RSRSSSNSSR (66 aa)) is disordered. Residues 242-262 (WPRPPPRRFSPPRRMLPPPPM) show a composition bias toward pro residues. The segment covering 266–298 (SPPRMRRRSRSPRRRSPVRRRSRSPGRRRHRSR) has biased composition (basic residues).

The protein belongs to the splicing factor SR family. Found in mRNA splicing-dependent exon junction complexes (EJC). Found in a post-splicing complex with NXF1, RBM8A, UPF1, UPF2, UPF3A, UPF3B and RNPS1. Component of the heterotrimeric ASAP (apoptosis- and splicing-associated protein) and PSAP complexes consisting of RNPS1, SAP18 and either ACIN1 or PNN, respectively; the ASAP and PSAP complexes probably are formed mutually exclusive. Component of the active spliceosome. Associates with polysomes. Interacts with the cleaved p110 isoform of CDC2L1, CSNK2A1, PNN, SART3, SRP54, SRRM1 and TRA2B/SFRS10. Post-translationally, phosphorylated on one or more of the four Ser/Thr residues (Ser-43, Thr-49, Ser-52 or Ser-53). Ser-53 phosphorylation site is important for splicing and translation stimulation activity in vitro. In terms of tissue distribution, ubiquitous.

The protein resides in the nucleus. It is found in the nucleus speckle. The protein localises to the cytoplasm. In terms of biological role, part of pre- and post-splicing multiprotein mRNP complexes. Auxiliary component of the splicing-dependent multiprotein exon junction complex (EJC) deposited at splice junction on mRNAs. The EJC is a dynamic structure consisting of core proteins and several peripheral nuclear and cytoplasmic associated factors that join the complex only transiently either during EJC assembly or during subsequent mRNA metabolism. Component of the ASAP and PSAP complexes which bind RNA in a sequence-independent manner and are proposed to be recruited to the EJC prior to or during the splicing process and to regulate specific excision of introns in specific transcription subsets. The ASAP complex can inhibit RNA processing during in vitro splicing reactions. The ASAP complex promotes apoptosis and is disassembled after induction of apoptosis. Enhances the formation of the ATP-dependent A complex of the spliceosome. Involved in both constitutive splicing and, in association with SRP54 and TRA2B/SFRS10, in distinctive modulation of alternative splicing in a substrate-dependent manner. Involved in the splicing modulation of BCL2L1/Bcl-X (and probably other apoptotic genes); specifically inhibits formation of proapoptotic isoforms such as Bcl-X(S); the activity is different from the established EJC assembly and function. Participates in mRNA 3'-end cleavage. Involved in UPF2-dependent nonsense-mediated decay (NMD) of mRNAs containing premature stop codons. Also mediates increase of mRNA abundance and translational efficiency. Binds spliced mRNA 20-25 nt upstream of exon-exon junctions. The protein is RNA-binding protein with serine-rich domain 1 (RNPS1) of Homo sapiens (Human).